A 541-amino-acid chain; its full sequence is Nuclear receptor subfamily 5 group A member 2 (541 aa).

Residues 1–10 show a composition bias toward polar residues; the sequence is MSSNSDTGDL. Residues 1–35 are disordered; sequence MSSNSDTGDLQESLKHGLTPIGAGLPDRHGSPIPA. The segment at residues 83–154 is a DNA-binding region (nuclear receptor); it reads EELCPVCGDK…KCLSVGMKLE (72 aa). Zn(2+)-binding residues include Cys-86, Cys-89, Cys-103, Cys-106, Cys-122, Cys-128, Cys-138, and Cys-141. NR C4-type zinc fingers lie at residues 86 to 106 and 122 to 146; these read CPVCGDKVSGYHYGLLTCESC and CIENQNCQIDKTQRKRCPYCRFQKC. The tract at residues 152-167 is C-terminal extension (CTE); it reads KLEAVRADRMRGGRNK. Residues 168-187 carry the FTZ-F1 box motif; sequence FGPMYKRDRALKQQKKALIR. Lys-270 is covalently cross-linked (Glycyl lysine isopeptide (Lys-Gly) (interchain with G-Cter in SUMO1)). Positions 300 to 539 constitute an NR LBD domain; the sequence is SIPHLILELL…NLLIEMLHAK (240 aa). A phospholipid derivative is bound by residues 421 to 424, Tyr-516, and Lys-520; that span reads GATL. The tract at residues 528-539 is AF-2; it reads YNNLLIEMLHAK.

Belongs to the nuclear hormone receptor family. NR5 subfamily. As to quaternary structure, monomer; Binds DNA as a monomer. Interacts with nuclear receptor corepressors NR0B1 and NR0B2; repressing NR5A2 nuclear receptor activity. Interacts with nuclear receptor coactivators CTNNB1, PPARGC1A and NCOA2; interaction takes place following ligand-binding and promotes target gene activation. Interacts (when sumoylated) with GPS2; interaction with GPS2 onto hepatic acute phase protein promoters prevents N-Cor corepressor complex dissociation. Interacts with HNF1A. Interacts with GRIP1. Post-translationally, sumoylated by SUMO1 at Lys-270 during the hepatic acute phase response, leading to promote interaction with GPS2 and prevent N-Cor corepressor complex dissociation. Abundantly expressed in pancreas, less in liver, very low levels in heart and lung. Expressed in the Hep-G2 cell line. Isoform 1 and isoform 2 seem to be present in fetal and adult liver and Hep-G2 cells.

It is found in the nucleus. Its subcellular location is the chromosome. Activated by synthetic agonists RR-RJW100, SR-RJW100, endo sulfamide compound 6N and GSK8470. Its function is as follows. Orphan nuclear receptor that binds DNA as a monomer to the 5'-TCAAGGCCA-3' sequence and controls expression of target genes: regulates key biological processes, such as early embryonic development, cholesterol and bile acid synthesis pathways, as well as liver and pancreas morphogenesis. Ligand-binding causes conformational change which causes recruitment of coactivators, promoting target gene activation. The specific ligand is unknown, but specific phospholipids, such as phosphatidylethanolamine, phosphatidylserine, dilauroyl phosphatidylcholine and diundecanoyl phosphatidylcholine can act as ligand in vitro. Acts as a pioneer transcription factor, which unwraps target DNA from histones and elicits local opening of closed chromatin. Plays a central role during preimplantation stages of embryonic development. Plays a minor role in zygotic genome activation (ZGA) by regulating a small set of two-cell stage genes. Plays a major role in morula development (2-16 cells embryos) by acting as a master regulator at the 8-cell stage, controlling expression of lineage-specifying transcription factors and genes involved in mitosis, telomere maintenance and DNA repair. Zygotic NR5A2 binds to both closed and open chromatin with other transcription factors, often at SINE B1/Alu repeats DNA elements, promoting chromatin accessibility at nearby regulatory regions. Also involved in the epiblast stage of development and embryonic stem cell pluripotency, by promoting expression of POU5F1/OCT4. Regulates other processes later in development, such as formation of connective tissue in lower jaw and middle ear, neural stem cell differentiation, ovarian follicle development and Sertoli cell differentiation. Involved in exocrine pancreas development and acinar cell differentiation. Acts as an essential transcriptional regulator of lipid metabolism. Key regulator of cholesterol 7-alpha-hydroxylase gene (CYP7A) expression in liver. Also acts as a negative regulator of inflammation in different organs, such as, liver and pancreas. Protects against intestinal inflammation via its ability to regulate glucocorticoid production. Plays an anti-inflammatory role during the hepatic acute phase response by acting as a corepressor: inhibits the hepatic acute phase response by preventing dissociation of the N-Cor corepressor complex. Acts as a regulator of immunity by promoting lymphocyte T-cell development, proliferation and effector functions. Also involved in resolution of endoplasmic reticulum stress in the liver. In terms of biological role, in constrast to isoform 1 and isoform 2, does not induce cholesterol 7-alpha-hydroxylase gene (CYP7A) promoter activity. (Microbial infection) Plays a crucial role for hepatitis B virus gene transcription and DNA replication. Mechanistically, synergistically cooperates with HNF1A to up-regulate the activity of one of the critical cis-elements in the hepatitis B virus genome enhancer II (ENII). The chain is Nuclear receptor subfamily 5 group A member 2 from Homo sapiens (Human).